A 115-amino-acid chain; its full sequence is Large ribosomal subunit protein uL24 (115 aa).

This sequence belongs to the universal ribosomal protein uL24 family. In terms of assembly, part of the 50S ribosomal subunit.

Functionally, one of two assembly initiator proteins, it binds directly to the 5'-end of the 23S rRNA, where it nucleates assembly of the 50S subunit. Its function is as follows. One of the proteins that surrounds the polypeptide exit tunnel on the outside of the subunit. The chain is Large ribosomal subunit protein uL24 from Deinococcus deserti (strain DSM 17065 / CIP 109153 / LMG 22923 / VCD115).